The following is an 84-amino-acid chain: Small ribosomal subunit protein uS17 (84 aa).

It belongs to the universal ribosomal protein uS17 family. As to quaternary structure, part of the 30S ribosomal subunit.

In terms of biological role, one of the primary rRNA binding proteins, it binds specifically to the 5'-end of 16S ribosomal RNA. The sequence is that of Small ribosomal subunit protein uS17 from Clostridium kluyveri (strain NBRC 12016).